The chain runs to 495 residues: Sugar phosphate exchanger 3 (495 aa).

Residues Phe-16–Ala-36 form a helical membrane-spanning segment. Asn-58 carries an N-linked (GlcNAc...) asparagine glycan. The next 5 membrane-spanning stretches (helical) occupy residues Thr-82 to Ile-102, Trp-114 to Thr-134, Leu-148 to Gly-168, Val-178 to Ala-198, and Phe-210 to Val-230. Residue Asn-267 is glycosylated (N-linked (GlcNAc...) asparagine). 6 helical membrane-spanning segments follow: residues Leu-298–Leu-318, Ile-334–Leu-354, Ala-358–Ser-378, Leu-387–Ile-407, Gly-429–Ile-449, and Leu-453–Ile-473.

This sequence belongs to the major facilitator superfamily. Organophosphate:Pi antiporter (OPA) (TC 2.A.1.4) family. In terms of assembly, interacts with ATRAID; the interaction is direct and both proteins are mutually dependent for their stability. Post-translationally, glycosylated.

It is found in the endoplasmic reticulum membrane. It localises to the lysosome membrane. Its function is as follows. Unlike the other SLC37 members, lacks glucose-6-phosphate antiporter activity. In osteoclasts, forms a transporter complex with ATRAID for nitrogen-containing-bisphophonates (N-BPs) required for releasing N-BP molecules that have trafficked to lysosomes through fluid-phase endocytosis into the cytosol. This chain is Sugar phosphate exchanger 3 (SLC37A3), found in Bos taurus (Bovine).